Reading from the N-terminus, the 361-residue chain is Phosphate acyltransferase (361 aa).

This sequence belongs to the PlsX family. As to quaternary structure, homodimer. Probably interacts with PlsY.

The protein localises to the cytoplasm. The catalysed reaction is a fatty acyl-[ACP] + phosphate = an acyl phosphate + holo-[ACP]. The protein operates within lipid metabolism; phospholipid metabolism. In terms of biological role, catalyzes the reversible formation of acyl-phosphate (acyl-PO(4)) from acyl-[acyl-carrier-protein] (acyl-ACP). This enzyme utilizes acyl-ACP as fatty acyl donor, but not acyl-CoA. The polypeptide is Phosphate acyltransferase (Parvibaculum lavamentivorans (strain DS-1 / DSM 13023 / NCIMB 13966)).